The primary structure comprises 129 residues: Phosphoribosyl-AMP cyclohydrolase (129 aa).

Residue Asp78 participates in Mg(2+) binding. Cys79 contacts Zn(2+). Residues Asp80 and Asp82 each contribute to the Mg(2+) site. The Zn(2+) site is built by Cys96 and Cys103.

It belongs to the PRA-CH family. Homodimer. Mg(2+) serves as cofactor. Zn(2+) is required as a cofactor.

It is found in the cytoplasm. The catalysed reaction is 1-(5-phospho-beta-D-ribosyl)-5'-AMP + H2O = 1-(5-phospho-beta-D-ribosyl)-5-[(5-phospho-beta-D-ribosylamino)methylideneamino]imidazole-4-carboxamide. It participates in amino-acid biosynthesis; L-histidine biosynthesis; L-histidine from 5-phospho-alpha-D-ribose 1-diphosphate: step 3/9. In terms of biological role, catalyzes the hydrolysis of the adenine ring of phosphoribosyl-AMP. This Nitrosomonas europaea (strain ATCC 19718 / CIP 103999 / KCTC 2705 / NBRC 14298) protein is Phosphoribosyl-AMP cyclohydrolase.